The primary structure comprises 369 residues: Chorismate synthase (369 aa).

Arg-48 and Arg-54 together coordinate NADP(+). FMN contacts are provided by residues 125 to 127 (RSS), 238 to 239 (NA), Gly-278, 293 to 297 (KPTSS), and Arg-319.

The protein belongs to the chorismate synthase family. Homotetramer. The cofactor is FMNH2.

It carries out the reaction 5-O-(1-carboxyvinyl)-3-phosphoshikimate = chorismate + phosphate. The protein operates within metabolic intermediate biosynthesis; chorismate biosynthesis; chorismate from D-erythrose 4-phosphate and phosphoenolpyruvate: step 7/7. In terms of biological role, catalyzes the anti-1,4-elimination of the C-3 phosphate and the C-6 proR hydrogen from 5-enolpyruvylshikimate-3-phosphate (EPSP) to yield chorismate, which is the branch point compound that serves as the starting substrate for the three terminal pathways of aromatic amino acid biosynthesis. This reaction introduces a second double bond into the aromatic ring system. The polypeptide is Chorismate synthase (Cupriavidus necator (strain ATCC 17699 / DSM 428 / KCTC 22496 / NCIMB 10442 / H16 / Stanier 337) (Ralstonia eutropha)).